The primary structure comprises 340 residues: UDP-N-acetylglucosamine--N-acetylmuramyl-(pentapeptide) pyrophosphoryl-undecaprenol N-acetylglucosamine transferase (340 aa).

Residues 10–12, asparagine 124, serine 179, and glutamine 277 contribute to the UDP-N-acetyl-alpha-D-glucosamine site; that span reads TGG.

It belongs to the glycosyltransferase 28 family. MurG subfamily.

The protein localises to the cell inner membrane. It catalyses the reaction di-trans,octa-cis-undecaprenyl diphospho-N-acetyl-alpha-D-muramoyl-L-alanyl-D-glutamyl-meso-2,6-diaminopimeloyl-D-alanyl-D-alanine + UDP-N-acetyl-alpha-D-glucosamine = di-trans,octa-cis-undecaprenyl diphospho-[N-acetyl-alpha-D-glucosaminyl-(1-&gt;4)]-N-acetyl-alpha-D-muramoyl-L-alanyl-D-glutamyl-meso-2,6-diaminopimeloyl-D-alanyl-D-alanine + UDP + H(+). It participates in cell wall biogenesis; peptidoglycan biosynthesis. In terms of biological role, cell wall formation. Catalyzes the transfer of a GlcNAc subunit on undecaprenyl-pyrophosphoryl-MurNAc-pentapeptide (lipid intermediate I) to form undecaprenyl-pyrophosphoryl-MurNAc-(pentapeptide)GlcNAc (lipid intermediate II). The sequence is that of UDP-N-acetylglucosamine--N-acetylmuramyl-(pentapeptide) pyrophosphoryl-undecaprenol N-acetylglucosamine transferase from Sulfurimonas denitrificans (strain ATCC 33889 / DSM 1251) (Thiomicrospira denitrificans (strain ATCC 33889 / DSM 1251)).